Reading from the N-terminus, the 141-residue chain is Bombinins BLP-7/H-BO (141 aa).

An N-terminal signal peptide occupies residues 1–18 (MNFKYIIAVSFLIASTYA). A propeptide spanning residues 19–43 (RSVKNDEQSLSQRDVLDEESLREIR) is cleaved from the precursor. Asparagine amide is present on Asn-70. The propeptide occupies 74 to 123 (TAEEHEVMKRLEAVMRDLDSLDHPEEASEKETRGFNQEEIANLFTKKEKR). Leu-140 is modified (leucine amide).

The protein belongs to the bombinin family. In terms of tissue distribution, expressed by the skin glands.

It localises to the secreted. Antimicrobial peptide with activity against Gram-positive and -negative bacteria and fungi. Shows activity against P.acnes (MIC=5 uM), E.coli (MIC=5-6.3 uM), S.aureus (MIC=5-6.3 uM), M.luteus, S.cerevisiae and C.albicans (MIC=10-12.5 uM). Also reduces the production of interleukin (IL)-8 and granulocyte-macrophage colony stimulating factor (CSF2) in normal human epidermal keratinocytes (NHEKs). Shows anticancer activity against three human hepatoma cell lines. In vivo, using the rat ear edema model, suppress P.acnes-induced skin inflammation, significantly reducing the ear thickness. Shows weak hemolytic activity against human erythrocytes. In terms of biological role, shows weak antimicrobial activity (tested on E.coli, S.aureus and C.albicans). Shows high hemolytic activity against human erythrocytes (38% erythrocyte lysis at 80.0 uM, and up to 85% at 159.7 uM). This chain is Bombinins BLP-7/H-BO, found in Bombina orientalis (Oriental fire-bellied toad).